The primary structure comprises 343 residues: Glyceraldehyde-3-phosphate dehydrogenase 1 (343 aa).

NAD(+)-binding positions include 13–14 (RI), aspartate 35, arginine 79, and serine 121. D-glyceraldehyde 3-phosphate is bound by residues 154–156 (SCT), threonine 185, 214–215 (TG), and arginine 237. Cysteine 155 (nucleophile) is an active-site residue. Asparagine 319 is a binding site for NAD(+).

It belongs to the glyceraldehyde-3-phosphate dehydrogenase family. As to quaternary structure, homotetramer.

It is found in the cytoplasm. The catalysed reaction is D-glyceraldehyde 3-phosphate + phosphate + NAD(+) = (2R)-3-phospho-glyceroyl phosphate + NADH + H(+). It participates in carbohydrate degradation; glycolysis; pyruvate from D-glyceraldehyde 3-phosphate: step 1/5. Catalyzes the oxidative phosphorylation of glyceraldehyde 3-phosphate (G3P) to 1,3-bisphosphoglycerate (BPG) using the cofactor NAD. The first reaction step involves the formation of a hemiacetal intermediate between G3P and a cysteine residue, and this hemiacetal intermediate is then oxidized to a thioester, with concomitant reduction of NAD to NADH. The reduced NADH is then exchanged with the second NAD, and the thioester is attacked by a nucleophilic inorganic phosphate to produce BPG. This is Glyceraldehyde-3-phosphate dehydrogenase 1 (gap1) from Nostoc sp. (strain PCC 7120 / SAG 25.82 / UTEX 2576).